The primary structure comprises 639 residues: AP2-like ethylene-responsive transcription factor CRL5 (639 aa).

2 disordered regions span residues 25-59 and 258-277; these read PHMASSTMDEHHHVHHHQQQQQQQQQQQHHQQQQH and GRKRGGAGGGGQKQPVHHRK. Residues 43 to 59 are compositionally biased toward low complexity; the sequence is QQQQQQQQQQHHQQQQH. DNA-binding regions (AP2/ERF) lie at residues 288 to 351 and 387 to 445; these read QYRG…INFP and MYRG…TNFD. The segment covering 547-561 has biased composition (low complexity); sequence QQQQQHMSMSAASSL. The segment at 547 to 579 is disordered; it reads QQQQQHMSMSAASSLVTSLSNSREGSPDRGGGL.

This sequence belongs to the AP2/ERF transcription factor family. AP2 subfamily. Highly expressed at the base of the stem. Expressed in stems. Expressed a low levels in crown roots and seeds. Expressed in the stem region where adventitious (crown) root initiation occurs.

The protein resides in the nucleus. Acts as a positive regulator of adventitious (crown) root formation by promoting its initiation. Promotes adventitious root initiation through repression of cytokinin signaling by positively regulating the two-component response regulator RR1. Regulated by the auxin response factor and transcriptional activator ARF23/ARF1. The sequence is that of AP2-like ethylene-responsive transcription factor CRL5 from Oryza sativa subsp. japonica (Rice).